The primary structure comprises 32 residues: Turripeptide XIV-18 (32 aa).

The residue at position 30 (isoleucine 30) is an Isoleucine amide.

In terms of processing, contains 2 disulfide bonds. Expressed by the venom duct.

It is found in the secreted. In Gemmula speciosa (Splendid gem-turris), this protein is Turripeptide XIV-18.